Here is a 307-residue protein sequence, read N- to C-terminus: GMP synthase [glutamine-hydrolyzing] subunit B (307 aa).

Positions 1 to 184 (MWENFIEEKV…LGLPEKIYNR (184 aa)) constitute a GMPS ATP-PPase domain. Residue 27 to 33 (SGGVDSS) participates in ATP binding.

Heterodimer composed of a glutamine amidotransferase subunit (A) and a GMP-binding subunit (B).

It catalyses the reaction XMP + L-glutamine + ATP + H2O = GMP + L-glutamate + AMP + diphosphate + 2 H(+). It participates in purine metabolism; GMP biosynthesis; GMP from XMP (L-Gln route): step 1/1. Functionally, catalyzes the synthesis of GMP from XMP. This Thermococcus kodakarensis (strain ATCC BAA-918 / JCM 12380 / KOD1) (Pyrococcus kodakaraensis (strain KOD1)) protein is GMP synthase [glutamine-hydrolyzing] subunit B.